A 645-amino-acid polypeptide reads, in one-letter code: 1,4-alpha-glucan branching enzyme GlgB (645 aa).

The active-site Nucleophile is D309. Residue E352 is the Proton donor of the active site. Residues 619-645 (VKTRKGSKKQDGSKTKVRSNVTSRGKR) form a disordered region. Polar residues predominate over residues 636–645 (RSNVTSRGKR).

This sequence belongs to the glycosyl hydrolase 13 family. GlgB subfamily. Monomer.

It catalyses the reaction Transfers a segment of a (1-&gt;4)-alpha-D-glucan chain to a primary hydroxy group in a similar glucan chain.. The protein operates within glycan biosynthesis; glycogen biosynthesis. In terms of biological role, catalyzes the formation of the alpha-1,6-glucosidic linkages in glycogen by scission of a 1,4-alpha-linked oligosaccharide from growing alpha-1,4-glucan chains and the subsequent attachment of the oligosaccharide to the alpha-1,6 position. The polypeptide is 1,4-alpha-glucan branching enzyme GlgB (Bacillus cereus (strain 03BB102)).